The following is a 74-amino-acid chain: MKQSINIQDQFLNQLRKENTFVTLYLLNGFQLRGLIKGFDNFTVLLETEGKQQLIYKHAISTFVPQKNVSIELE.

The region spanning 9-69 (DQFLNQLRKE…ISTFVPQKNV (61 aa)) is the Sm domain.

This sequence belongs to the Hfq family. In terms of assembly, homohexamer.

RNA chaperone that binds small regulatory RNA (sRNAs) and mRNAs to facilitate mRNA translational regulation in response to envelope stress, environmental stress and changes in metabolite concentrations. Also binds with high specificity to tRNAs. The protein is RNA-binding protein Hfq of Bacillus cereus (strain Q1).